We begin with the raw amino-acid sequence, 2551 residues long: Probable polyketide synthase 13 (2551 aa).

The Ketosynthase family 3 (KS3) domain occupies 10 to 434 (ENDVAIIGIG…GSNCCLILSQ (425 aa)). Active-site for beta-ketoacyl synthase activity residues include Cys176, His317, and His358. The tract at residues 621–654 (GIEVSFIIGHSLGEIPAAYCSGMINIDTLCYLIY) is acyl/malonyl transferase. Ser631 acts as the For acyl/malonyl transferase activity in catalysis. The tract at residues 928 to 1057 (TDNLGYLNEN…GDFQLSNHSS (130 aa)) is N-terminal hotdog fold. A PKS/mFAS DH domain is found at 928 to 1226 (TDNLGYLNEN…CTSLTPIKES (299 aa)). The active-site Proton acceptor; for dehydratase activity is His961. Residues 1076–1226 (NLTKLSRDEL…CTSLTPIKES (151 aa)) form a C-terminal hotdog fold region. Asp1136 functions as the Proton donor; for dehydratase activity in the catalytic mechanism. One can recognise a Carrier domain in the interval 2465–2542 (DCQTIIKDSF…SSIQYTINSF (78 aa)). O-(pantetheine 4'-phosphoryl)serine is present on Ser2502.

Pantetheine 4'-phosphate is required as a cofactor.

Its function is as follows. Probable polyketide synthase. The chain is Probable polyketide synthase 13 (pks13) from Dictyostelium discoideum (Social amoeba).